Reading from the N-terminus, the 361-residue chain is 3-dehydroquinate synthase (361 aa).

NAD(+) is bound by residues 71-76 (DGEQFK), 105-109 (GVIGD), 129-130 (TT), Lys-142, Lys-151, and 169-172 (CLQT). Zn(2+) contacts are provided by Glu-184, His-247, and His-264.

This sequence belongs to the sugar phosphate cyclases superfamily. Dehydroquinate synthase family. The cofactor is Co(2+). Zn(2+) serves as cofactor. It depends on NAD(+) as a cofactor.

It localises to the cytoplasm. It carries out the reaction 7-phospho-2-dehydro-3-deoxy-D-arabino-heptonate = 3-dehydroquinate + phosphate. It functions in the pathway metabolic intermediate biosynthesis; chorismate biosynthesis; chorismate from D-erythrose 4-phosphate and phosphoenolpyruvate: step 2/7. In terms of biological role, catalyzes the conversion of 3-deoxy-D-arabino-heptulosonate 7-phosphate (DAHP) to dehydroquinate (DHQ). The sequence is that of 3-dehydroquinate synthase from Edwardsiella ictaluri (strain 93-146).